The following is a 195-amino-acid chain: UPF0215 protein TGAM_0348 (195 aa).

The protein belongs to the UPF0215 family.

This is UPF0215 protein TGAM_0348 from Thermococcus gammatolerans (strain DSM 15229 / JCM 11827 / EJ3).